The primary structure comprises 197 residues: Ribosome maturation factor RimM (197 aa).

A PRC barrel domain is found at 99-174 (EDEFYQVDLI…LVVEPVAAGL (76 aa)).

Belongs to the RimM family. As to quaternary structure, binds ribosomal protein uS19.

Its subcellular location is the cytoplasm. Its function is as follows. An accessory protein needed during the final step in the assembly of 30S ribosomal subunit, possibly for assembly of the head region. Essential for efficient processing of 16S rRNA. May be needed both before and after RbfA during the maturation of 16S rRNA. It has affinity for free ribosomal 30S subunits but not for 70S ribosomes. This Bartonella quintana (strain Toulouse) (Rochalimaea quintana) protein is Ribosome maturation factor RimM.